A 144-amino-acid chain; its full sequence is 3-dehydroquinate dehydratase (144 aa).

Tyr-23 functions as the Proton acceptor in the catalytic mechanism. 3 residues coordinate substrate: Asn-74, His-80, and Asp-87. The active-site Proton donor is the His-100. Substrate-binding positions include 101–102 (LS) and Arg-111.

It belongs to the type-II 3-dehydroquinase family. As to quaternary structure, homododecamer.

It carries out the reaction 3-dehydroquinate = 3-dehydroshikimate + H2O. Its pathway is metabolic intermediate biosynthesis; chorismate biosynthesis; chorismate from D-erythrose 4-phosphate and phosphoenolpyruvate: step 3/7. In terms of biological role, catalyzes a trans-dehydration via an enolate intermediate. The polypeptide is 3-dehydroquinate dehydratase (Haemophilus ducreyi (strain 35000HP / ATCC 700724)).